We begin with the raw amino-acid sequence, 180 residues long: Large ribosomal subunit protein uL6 (180 aa).

Belongs to the universal ribosomal protein uL6 family. Part of the 50S ribosomal subunit.

Functionally, this protein binds to the 23S rRNA, and is important in its secondary structure. It is located near the subunit interface in the base of the L7/L12 stalk, and near the tRNA binding site of the peptidyltransferase center. The protein is Large ribosomal subunit protein uL6 of Dictyoglomus turgidum (strain DSM 6724 / Z-1310).